A 306-amino-acid polypeptide reads, in one-letter code: Small ribosomal subunit protein uS2 (306 aa).

An N-acetylserine modification is found at S2. Laminin-binding stretches follow at residues 161–180 (IPCNNKGAHSVGLMWWMLAR) and 205–229 (RDPEEIEKEEQAAAEKATTKEEYQG). [DE]-W-[ST] repeat units lie at residues 230–232 (EWT), 245–247 (DWS), 276–278 (DWS), 286–288 (DWS), and 304–306 (EWS). The interval 242-306 (EVADWSEGVQ…EWTGTTTEWS (65 aa)) is laminin-binding. A disordered region spans residues 261–306 (PAERPEIPAAKPAAEDWSSQPASTDDWSAAPTAQASEWTGTTTEWS). The span at 277–306 (WSSQPASTDDWSAAPTAQASEWTGTTTEWS) shows a compositional bias: polar residues.

Belongs to the universal ribosomal protein uS2 family. In terms of assembly, monomer (37LRP) and homodimer (67LR). Component of the small ribosomal subunit. Mature ribosomes consist of a small (40S) and a large (60S) subunit. The 40S subunit contains about 33 different proteins and 1 molecule of RNA (18S). The 60S subunit contains about 49 different proteins and 3 molecules of RNA (28S, 5.8S and 5S). Interacts with rps21. Interacts with several laminins including at least lamb1. Interacts with mdk. Post-translationally, acylated. Acylation may be a prerequisite for conversion of the monomeric 37 kDa laminin receptor precursor (37LRP) to the mature dimeric 67 kDa laminin receptor (67LR), and may provide a mechanism for membrane association. Cleaved by stromelysin-3 (ST3) at the cell surface. Cleavage by stromelysin-3 may be a mechanism to alter cell-extracellular matrix interactions.

It is found in the cell membrane. It localises to the cytoplasm. The protein localises to the nucleus. Its function is as follows. Required for the assembly and/or stability of the 40S ribosomal subunit. Required for the processing of the 20S rRNA-precursor to mature 18S rRNA in a late step of the maturation of 40S ribosomal subunits. Also functions as a cell surface receptor for laminin. Plays a role in cell adhesion to the basement membrane and in the consequent activation of signaling transduction pathways. May play a role in cell fate determination and tissue morphogenesis. This is Small ribosomal subunit protein uS2 (rpsa) from Xenopus tropicalis (Western clawed frog).